Reading from the N-terminus, the 384-residue chain is Involucrin (384 aa).

The disordered stretch occupies residues 1 to 384; that stretch reads MSQQHTLPVT…LPEQPQEPEV (384 aa). 2 stretches are compositionally biased toward basic and acidic residues: residues 56–65 and 80–134; these read PSKHEEKGTD and PELH…ELHL. Residues 137–146 show a composition bias toward low complexity; it reads QQQQESQEQE. Over residues 179–208 the composition is skewed to basic and acidic residues; that stretch reads KQREPQESQEQRLHLGKEQESQEQRLHLGE. Over residues 239–267 the composition is skewed to low complexity; it reads PEQRLQLLPQGPQEQELHLGKQQQQQESQ. 2 stretches are compositionally biased toward basic and acidic residues: residues 268–308 and 315–336; these read QHQE…KKLL and EAVK…KEQL.

It belongs to the involucrin family. In terms of assembly, directly or indirectly cross-linked to cornifelin (CNFN). Substrate of transglutaminase. Specific glutamines or lysines are cross-linked to keratins, desmoplakin and to inter involucrin molecules. As to expression, keratinocytes of epidermis and other stratified squamous epithelia.

The protein localises to the cytoplasm. Part of the insoluble cornified cell envelope (CE) of stratified squamous epithelia. This Otolemur crassicaudatus (Brown greater galago) protein is Involucrin (IVL).